Reading from the N-terminus, the 72-residue chain is UPF0270 protein YheU (72 aa).

This sequence belongs to the UPF0270 family.

In Salmonella dublin (strain CT_02021853), this protein is UPF0270 protein YheU.